We begin with the raw amino-acid sequence, 425 residues long: MYAAFLGLGMSVAILGPTFQDLAENVNRNISSLSLIFVGRATGFLSGTMIGGVLFDHINQFFLLGASMVATAAGLYLIPFCKTAVLLIITMSVFGASVGVVDTGANVLILDLWGDKGAPQMQALHFSFALGAFLAPLLAKLAWGTAPAQNHTESDLDTLMLNRSSNGTSDSVFAVPDDMNLLWAYASIGTFILVVSVFLFGLFCKKHSRQKKPRASAEGARRAKYHRALLCLLFLFFFFYVGAEITYGSYIFSFATTHVGMEESEAAGLNSIFWGTFAACRGLAIFFATFLQPGTMIVLSNIGSLVSCFFLVLFDKSPLCLWIATSVYGASMAATFPSGISWIEQYTTLTGKSAAFFVIGSALGDMAIPAVIGILQGHYPDLPVVLYTCLGSAIFTAILFPVMYKLATLPLKREDQKALPTSSRL.

11 helical membrane-spanning segments follow: residues 35 to 55 (LIFV…GVLF), 61 to 81 (FFLL…IPFC), 84 to 104 (AVLL…VDTG), 123 to 143 (ALHF…KLAW), 183 to 203 (WAYA…FGLF), 228 to 248 (ALLC…ITYG), 271 to 291 (SIFW…ATFL), 294 to 314 (GTMI…LVLF), 320 to 340 (CLWI…PSGI), 355 to 375 (AFFV…IGIL), and 382 to 402 (LPVV…LFPV).

It belongs to the major facilitator superfamily.

It localises to the apical cell membrane. In terms of biological role, may function as a sodium-dependent glucose transporter. Potential channels for urea in the inner medulla of kidney. The sequence is that of Sodium-dependent glucose transporter 1A from Mus musculus (Mouse).